A 215-amino-acid polypeptide reads, in one-letter code: Ceramide-1-phosphate transfer protein (215 aa).

Positions 57, 61, 107, 111, and 151 each coordinate an N-acylsphingoid base 1-phosphate.

The protein belongs to the GLTP family.

It is found in the cytoplasm. It localises to the cytosol. The protein resides in the golgi apparatus. The protein localises to the trans-Golgi network membrane. Its subcellular location is the cell membrane. It is found in the endosome membrane. It localises to the nucleus outer membrane. It catalyses the reaction N-(hexadecanoyl)-sphing-4-enine-1-phosphate(in) = N-(hexadecanoyl)-sphing-4-enine-1-phosphate(out). The enzyme catalyses N-(9Z-octadecenoyl)-sphing-4-enine-1-phosphate(in) = N-(9Z-octadecenoyl)-sphing-4-enine-1-phosphate(out). In terms of biological role, mediates the intracellular transfer of ceramide-1-phosphate (C1P) between organelle membranes and the cell membrane. Required for normal structure of the Golgi stacks. Can bind phosphoceramides with a variety of aliphatic chains, but has a preference for lipids with saturated C16:0 or monounsaturated C18:1 aliphatic chains, and is inefficient with phosphoceramides containing lignoceryl (C24:0). Plays a role in the regulation of the cellular levels of ceramide-1-phosphate, and thereby contributes to the regulation of phospholipase PLA2G4A activity and the release of arachidonic acid. Has no activity with galactosylceramide, lactosylceramide, sphingomyelin, phosphatidylcholine, phosphatidic acid and ceramide. C1P transfer is stimulated by phosphatidylserine in C1P source vesicles. Regulates autophagy and pyroptosis, but not apoptosis. This chain is Ceramide-1-phosphate transfer protein (cptp), found in Xenopus tropicalis (Western clawed frog).